The chain runs to 142 residues: Large ribosomal subunit protein uL13 (142 aa).

Belongs to the universal ribosomal protein uL13 family. In terms of assembly, part of the 50S ribosomal subunit.

Its function is as follows. This protein is one of the early assembly proteins of the 50S ribosomal subunit, although it is not seen to bind rRNA by itself. It is important during the early stages of 50S assembly. This is Large ribosomal subunit protein uL13 from Pectobacterium atrosepticum (strain SCRI 1043 / ATCC BAA-672) (Erwinia carotovora subsp. atroseptica).